Here is a 257-residue protein sequence, read N- to C-terminus: Probable dihydroorotate dehydrogenase B (NAD(+)), electron transfer subunit (257 aa).

Residues 2–89 form the FAD-binding FR-type domain; sequence EKPVICRIKE…RGPYGTYFEP (88 aa). The [2Fe-2S] cluster site is built by cysteine 208, cysteine 213, cysteine 216, and cysteine 226.

Belongs to the PyrK family. In terms of assembly, heterotetramer of 2 PyrK and 2 PyrD type B subunits. [2Fe-2S] cluster serves as cofactor. FAD is required as a cofactor.

The protein operates within pyrimidine metabolism; UMP biosynthesis via de novo pathway; orotate from (S)-dihydroorotate (NAD(+) route): step 1/1. Its function is as follows. Responsible for channeling the electrons from the oxidation of dihydroorotate from the FMN redox center in the PyrD type B subunit to the ultimate electron acceptor NAD(+). The sequence is that of Probable dihydroorotate dehydrogenase B (NAD(+)), electron transfer subunit from Methanocaldococcus jannaschii (strain ATCC 43067 / DSM 2661 / JAL-1 / JCM 10045 / NBRC 100440) (Methanococcus jannaschii).